The sequence spans 372 residues: Alanine racemase (372 aa).

The active-site Proton acceptor; specific for D-alanine is Lys41. Residue Lys41 is modified to N6-(pyridoxal phosphate)lysine. Substrate is bound at residue Arg139. The active-site Proton acceptor; specific for L-alanine is Tyr268. A substrate-binding site is contributed by Met316.

This sequence belongs to the alanine racemase family. The cofactor is pyridoxal 5'-phosphate.

The catalysed reaction is L-alanine = D-alanine. It participates in amino-acid biosynthesis; D-alanine biosynthesis; D-alanine from L-alanine: step 1/1. Catalyzes the interconversion of L-alanine and D-alanine. May also act on other amino acids. This chain is Alanine racemase (alr), found in Borreliella burgdorferi (strain ATCC 35210 / DSM 4680 / CIP 102532 / B31) (Borrelia burgdorferi).